An 851-amino-acid polypeptide reads, in one-letter code: UPF0508 protein CAGL0M08074g (851 aa).

This sequence belongs to the UPF0508 family.

In Candida glabrata (strain ATCC 2001 / BCRC 20586 / JCM 3761 / NBRC 0622 / NRRL Y-65 / CBS 138) (Yeast), this protein is UPF0508 protein CAGL0M08074g.